We begin with the raw amino-acid sequence, 156 residues long: Small ribosomal subunit protein uS7 (156 aa).

It belongs to the universal ribosomal protein uS7 family. Part of the 30S ribosomal subunit. Contacts proteins S9 and S11.

Its function is as follows. One of the primary rRNA binding proteins, it binds directly to 16S rRNA where it nucleates assembly of the head domain of the 30S subunit. Is located at the subunit interface close to the decoding center, probably blocks exit of the E-site tRNA. The polypeptide is Small ribosomal subunit protein uS7 (Idiomarina loihiensis (strain ATCC BAA-735 / DSM 15497 / L2-TR)).